The primary structure comprises 72 residues: uncharacterized protein (72 aa).

This is an uncharacterized protein from Escherichia coli (strain K12).